Reading from the N-terminus, the 263-residue chain is Protein MARD1 (263 aa).

The FLZ-type zinc-finger motif lies at 219-263 (SFLSRCFTCKKNLDQKQDIYIYRGEKGFCSSECRYQEMLLDQMET).

It belongs to the FLZ family. Interacts with KIN10 and KIN11 via its FLZ-type zinc finger domain. Interacts with KINB1 and KINB2 via its N-terminal part. Interacts with TZF4, TZF5 and TZF6. Interacts with MPK3 and MPK6.

It localises to the cytoplasm. Its subcellular location is the stress granule. It is found in the P-body. Functionally, may act as an adapter to facilitate the interaction of SnRK1 complex with effector proteins, conferring tissue- and stimulus-type specific differences in the SnRK1 regulation pathway. Involved in seed dormancy control. The polypeptide is Protein MARD1 (Arabidopsis thaliana (Mouse-ear cress)).